Reading from the N-terminus, the 598-residue chain is 4-coumarate--CoA ligase-like 6 (598 aa).

Residues Ser232, Ser233, Gly234, Thr235, Thr236, and Lys240 each contribute to the ATP site. Residue Arg318 coordinates CoA. The segment at 320–389 (DLAAAARAVE…TVFPSVQIVQ (70 aa)) is SBD1. 3 residues coordinate (E)-4-coumaroyl-AMP: Gly367, Gln389, and Thr394. 4 residues coordinate ATP: Gln389, Thr394, Asp475, and Arg490. Residues 390–454 (SYGLTESTGP…IRGPVVMKGY (65 aa)) form an SBD2 region. 2 residues coordinate (E)-4-coumaroyl-AMP: Lys492 and Lys496. The CoA site is built by Lys498 and Gly499. ATP is bound at residue Lys581.

Belongs to the ATP-dependent AMP-binding enzyme family. Mg(2+) is required as a cofactor.

It carries out the reaction (E)-4-coumarate + ATP + CoA = (E)-4-coumaroyl-CoA + AMP + diphosphate. The catalysed reaction is (E)-4-coumarate + ATP + H(+) = (E)-4-coumaroyl-AMP + diphosphate. It catalyses the reaction (E)-4-coumaroyl-AMP + CoA = (E)-4-coumaroyl-CoA + AMP + H(+). Functionally, carboxylate--CoA ligase that may use 4-coumarate as substrate. Follows a two-step reaction mechanism, wherein the carboxylate substrate first undergoes adenylation by ATP, followed by a thioesterification in the presence of CoA to yield the final CoA thioester. The protein is 4-coumarate--CoA ligase-like 6 (4CLL6) of Oryza sativa subsp. japonica (Rice).